Reading from the N-terminus, the 511-residue chain is Glucans biosynthesis protein G (511 aa).

The signal sequence occupies residues 1–22; it reads MMKMRWLSAAVMLTLYTSSSWA.

This sequence belongs to the OpgD/OpgG family.

The protein localises to the periplasm. Its pathway is glycan metabolism; osmoregulated periplasmic glucan (OPG) biosynthesis. Involved in the biosynthesis of osmoregulated periplasmic glucans (OPGs). The sequence is that of Glucans biosynthesis protein G from Shigella dysenteriae serotype 1 (strain Sd197).